The following is a 215-amino-acid chain: MSEKNPIVGLCQKASFLISAAQVDQCPPDEGLEVAFAGRSNAGKSSALNTLTHANLARTSKTPGRTQLLNFFSLDESRRLVDLPGYGYAKVPIPLKQHWQRHLEAYLSSRESLAGVFLMMDIRHPLTDFDRLMLDWAQASQLPIHVLMTKADKLAFGAAKNALLKVRREVQQGWGDVASLQLFSAPKRQGVDEAQMVLAQWLGLLDEDEEPVGEA.

The EngB-type G domain maps to 30–204 (EGLEVAFAGR…QMVLAQWLGL (175 aa)). GTP is bound by residues 38–45 (GRSNAGKS), 64–68 (GRTQL), 82–85 (DLPG), 149–152 (TKAD), and 182–185 (LFSA). Ser45 and Thr66 together coordinate Mg(2+).

The protein belongs to the TRAFAC class TrmE-Era-EngA-EngB-Septin-like GTPase superfamily. EngB GTPase family. It depends on Mg(2+) as a cofactor.

In terms of biological role, necessary for normal cell division and for the maintenance of normal septation. This Pseudomonas paraeruginosa (strain DSM 24068 / PA7) (Pseudomonas aeruginosa (strain PA7)) protein is Probable GTP-binding protein EngB.